Here is a 506-residue protein sequence, read N- to C-terminus: GMP synthase [glutamine-hydrolyzing] (506 aa).

Positions 3-188 (GFVILDFGSQ…AQGMCKAPAD (186 aa)) constitute a Glutamine amidotransferase type-1 domain. Cys80 (nucleophile) is an active-site residue. Residues His162 and Glu164 contribute to the active site. The 193-residue stretch at 189 to 381 (WDAPHIKDIL…LGLPKEMLWR (193 aa)) folds into the GMPS ATP-PPase domain. Residue 217 to 223 (SGGVDST) coordinates ATP.

As to quaternary structure, homodimer.

The enzyme catalyses XMP + L-glutamine + ATP + H2O = GMP + L-glutamate + AMP + diphosphate + 2 H(+). It participates in purine metabolism; GMP biosynthesis; GMP from XMP (L-Gln route): step 1/1. In terms of biological role, catalyzes the synthesis of GMP from XMP. This is GMP synthase [glutamine-hydrolyzing] from Bdellovibrio bacteriovorus (strain ATCC 15356 / DSM 50701 / NCIMB 9529 / HD100).